The following is a 131-amino-acid chain: Translation initiation factor 5A (131 aa).

Lys-37 is subject to Hypusine.

Belongs to the eIF-5A family.

The protein localises to the cytoplasm. In terms of biological role, functions by promoting the formation of the first peptide bond. This chain is Translation initiation factor 5A (eIF5A), found in Methanococcus maripaludis (strain C6 / ATCC BAA-1332).